A 193-amino-acid chain; its full sequence is ATP-dependent Clp protease proteolytic subunit (193 aa).

Serine 98 functions as the Nucleophile in the catalytic mechanism. Histidine 123 is an active-site residue.

The protein belongs to the peptidase S14 family. Fourteen ClpP subunits assemble into 2 heptameric rings which stack back to back to give a disk-like structure with a central cavity, resembling the structure of eukaryotic proteasomes.

It is found in the cytoplasm. The enzyme catalyses Hydrolysis of proteins to small peptides in the presence of ATP and magnesium. alpha-casein is the usual test substrate. In the absence of ATP, only oligopeptides shorter than five residues are hydrolyzed (such as succinyl-Leu-Tyr-|-NHMec, and Leu-Tyr-Leu-|-Tyr-Trp, in which cleavage of the -Tyr-|-Leu- and -Tyr-|-Trp bonds also occurs).. Cleaves peptides in various proteins in a process that requires ATP hydrolysis. Has a chymotrypsin-like activity. Plays a major role in the degradation of misfolded proteins. The sequence is that of ATP-dependent Clp protease proteolytic subunit from Lachnospira eligens (strain ATCC 27750 / DSM 3376 / VPI C15-48 / C15-B4) (Eubacterium eligens).